A 421-amino-acid polypeptide reads, in one-letter code: Mannose-1-phosphate guanylyltransferase regulatory subunit alpha (421 aa).

Residues 2-252 (LKAVILIGGP…EGCWSQIKSA (251 aa)) are substrate-binding domain. Positions 85 and 248 each coordinate GDP-alpha-D-mannose. A hexapeptide repeat domain region spans residues 274 to 421 (LASTKEGGPT…SRSFKNQIIL (148 aa)). Residues 357-385 (TPSDPNPNDPYSKIDSETLFREGKLTPSI) are C-loop.

Belongs to the transferase hexapeptide repeat family. In terms of assembly, component of the GMPPA-GMPPB mannose-1-phosphate guanylyltransferase complex composed of 4 gmppa subunits and 8 gmppb subunits; the complex is organized into three layers, a central layer made up of 2 gmppa dimers sandwiched between two layers each made up of 2 gmppb dimers.

The protein localises to the cytoplasm. Its function is as follows. Regulatory subunit of the GMPPA-GMPPB mannose-1-phosphate guanylyltransferase complex; reduces the catalytic activity of GMPPB when part of the complex. Mediates allosteric feedback inhibition of GMPPB catalytic activity upon binding GDP-alpha-D-mannose. Together with GMPPB regulates GDP-alpha-D-mannose levels. This is Mannose-1-phosphate guanylyltransferase regulatory subunit alpha (gmppa) from Xenopus tropicalis (Western clawed frog).